The sequence spans 534 residues: Protein FAM83D (534 aa).

2 disordered regions span residues 320–372 and 501–534; these read TPPS…STLG and GLNRGRKAQQEARQPNTNIDSGIMGTWPKSRGLQ. Over residues 329 to 342 the composition is skewed to polar residues; the sequence is TKPQAERLTSTPAR. Residues 350-362 show a composition bias toward basic and acidic residues; that stretch reads RMNKDIEEPDRKS. The span at 511 to 520 shows a compositional bias: polar residues; it reads EARQPNTNID.

The protein belongs to the FAM83 family.

Its subcellular location is the cytoplasm. It is found in the cytoskeleton. The protein resides in the spindle. The protein localises to the spindle pole. Its function is as follows. May regulate cell proliferation, growth, migration and epithelial to mesenchymal transition. May also be important for proper chromosome congression and alignment during mitosis. This is Protein FAM83D from Danio rerio (Zebrafish).